A 673-amino-acid chain; its full sequence is ATP-dependent zinc metalloprotease FtsH (673 aa).

Residues M1–N7 are Cytoplasmic-facing. The chain crosses the membrane as a helical span at residues L8–P28. Residues Q29 to M100 are Periplasmic-facing. Residues L101–F121 form a helical membrane-spanning segment. The Cytoplasmic portion of the chain corresponds to M122–R673. G194–T201 provides a ligand contact to ATP. H416 contributes to the Zn(2+) binding site. Residue E417 is part of the active site. H420 and D492 together coordinate Zn(2+). The tract at residues A601–R673 is disordered. Over residues S648–V660 the composition is skewed to polar residues. The segment covering V661–R673 has biased composition (basic and acidic residues).

In the central section; belongs to the AAA ATPase family. The protein in the C-terminal section; belongs to the peptidase M41 family. Homohexamer. Zn(2+) serves as cofactor.

It localises to the cell inner membrane. Functionally, acts as a processive, ATP-dependent zinc metallopeptidase for both cytoplasmic and membrane proteins. Plays a role in the quality control of integral membrane proteins. This is ATP-dependent zinc metalloprotease FtsH from Magnetococcus marinus (strain ATCC BAA-1437 / JCM 17883 / MC-1).